The chain runs to 1116 residues: uncharacterized protein (1116 aa).

EF-hand domains are found at residues E8 to A43, L42 to A77, L166 to L201, and L292 to K327. EH domains follow at residues E9 to K106, E134 to T224, and D259 to L348. 5 residues coordinate Ca(2+): D305, N307, N309, K311, and E316. Disordered regions lie at residues P360–T454, S703–V774, T812–A890, P909–I978, T1004–Y1024, S1044–L1066, and Q1095–H1116. Over residues N371–T381 the composition is skewed to pro residues. Polar residues predominate over residues F401–K416. The stretch at K565–T707 forms a coiled coil. The span at S723–S749 shows a compositional bias: polar residues. Composition is skewed to low complexity over residues N755 to V774 and T812 to S827. The span at S864 to A890 shows a compositional bias: polar residues. Over residues E957–P969 the composition is skewed to acidic residues. Acidic residues-rich tracts occupy residues T1055–L1066 and N1104–H1116.

It localises to the cytoplasm. Its subcellular location is the cytoskeleton. This is an uncharacterized protein from Schizosaccharomyces pombe (strain 972 / ATCC 24843) (Fission yeast).